Here is a 418-residue protein sequence, read N- to C-terminus: 3-isopropylmalate dehydratase large subunit (418 aa).

[4Fe-4S] cluster-binding residues include C299, C359, and C362.

It belongs to the aconitase/IPM isomerase family. LeuC type 2 subfamily. Heterodimer of LeuC and LeuD. [4Fe-4S] cluster is required as a cofactor.

The enzyme catalyses (2R,3S)-3-isopropylmalate = (2S)-2-isopropylmalate. It functions in the pathway amino-acid biosynthesis; L-leucine biosynthesis; L-leucine from 3-methyl-2-oxobutanoate: step 2/4. Catalyzes the isomerization between 2-isopropylmalate and 3-isopropylmalate, via the formation of 2-isopropylmaleate. The polypeptide is 3-isopropylmalate dehydratase large subunit (Oleidesulfovibrio alaskensis (strain ATCC BAA-1058 / DSM 17464 / G20) (Desulfovibrio alaskensis)).